Consider the following 412-residue polypeptide: DnaJ homolog subfamily A member 2 (412 aa).

The 63-residue stretch at K8–G70 folds into the J domain. K39 carries the N6-acetyllysine modification. 2 positions are modified to phosphoserine: S78 and S123. The CR-type zinc-finger motif lies at G130–V214. Residue K134 forms a Glycyl lysine isopeptide (Lys-Gly) (interchain with G-Cter in SUMO2) linkage. Zn(2+)-binding residues include C143 and C146. The CXXCXGXG motif repeat unit spans residues C143–G150. K152 bears the N6-acetyllysine mark. The Zn(2+) site is built by C159, C162, C186, C189, C202, and C205. 3 CXXCXGXG motif repeats span residues C159–G166, C186–G193, and C202–K209. The interval I365–Q412 is disordered. Position 391 is a phosphotyrosine (Y391). Residues S394 and S395 each carry the phosphoserine modification. Residue C409 is modified to Cysteine methyl ester. C409 is lipidated: S-farnesyl cysteine. The propeptide at A410–Q412 is removed in mature form.

It localises to the membrane. Functionally, co-chaperone of Hsc70. Stimulates ATP hydrolysis and the folding of unfolded proteins mediated by HSPA1A/B (in vitro). The sequence is that of DnaJ homolog subfamily A member 2 (Dnaja2) from Mus musculus (Mouse).